A 214-amino-acid chain; its full sequence is MRQHVNPLSQFFQLPLSLPSKNILFEKSHYPIHLDIGSAKGEFLIELATKCPDWNFVGLEIREPLVSLCEKKRRKLELTNLKFLFCNVNVSLDEWLSDLDFGQLKRVSIQFPDPWFKRKHFKRRVLKTNILNSIAKAMSKNGEIFIQSDIFELIEYMTNTIDENRYFTRKNVGDLRSINKNPYNVMTDREILSLKKNLLIYRVMYIRNSLLFTN.

S-adenosyl-L-methionine-binding residues include Asp-35, Glu-60, Asn-87, and Asp-113. Residue Asp-113 is part of the active site. Residues Lys-117 and Asp-149 each contribute to the substrate site.

It belongs to the class I-like SAM-binding methyltransferase superfamily. TrmB family.

The catalysed reaction is guanosine(46) in tRNA + S-adenosyl-L-methionine = N(7)-methylguanosine(46) in tRNA + S-adenosyl-L-homocysteine. It functions in the pathway tRNA modification; N(7)-methylguanine-tRNA biosynthesis. Its function is as follows. Catalyzes the formation of N(7)-methylguanine at position 46 (m7G46) in tRNA. The chain is tRNA (guanine-N(7)-)-methyltransferase from Prochlorococcus marinus (strain NATL2A).